Reading from the N-terminus, the 508-residue chain is GMP synthase [glutamine-hydrolyzing] (508 aa).

The Glutamine amidotransferase type-1 domain occupies 1–189; the sequence is MILVLDFGSQ…ALLVCGCEKT (189 aa). Residue C78 is the Nucleophile of the active site. Residues H163 and E165 contribute to the active site. In terms of domain architecture, GMPS ATP-PPase spans 190-383; that stretch reads WGMQHFAQRE…LGVSQDFLMR (194 aa). Position 217-223 (217-223) interacts with ATP; sequence SGGVDST.

As to quaternary structure, homodimer.

It carries out the reaction XMP + L-glutamine + ATP + H2O = GMP + L-glutamate + AMP + diphosphate + 2 H(+). It functions in the pathway purine metabolism; GMP biosynthesis; GMP from XMP (L-Gln route): step 1/1. Its function is as follows. Catalyzes the synthesis of GMP from XMP. This is GMP synthase [glutamine-hydrolyzing] (guaA) from Helicobacter pylori (strain J99 / ATCC 700824) (Campylobacter pylori J99).